A 230-amino-acid chain; its full sequence is Orotidine 5'-phosphate decarboxylase (230 aa).

Substrate is bound by residues Asp10, Lys31, 58–67 (DLKLHDIPNT), Thr117, Arg179, Gln188, Gly208, and Arg209. Lys60 (proton donor) is an active-site residue. The interval 177 to 196 (GIRPKDASSDDQKRITTPED) is disordered. The span at 179 to 196 (RPKDASSDDQKRITTPED) shows a compositional bias: basic and acidic residues.

It belongs to the OMP decarboxylase family. Type 1 subfamily. In terms of assembly, homodimer.

The catalysed reaction is orotidine 5'-phosphate + H(+) = UMP + CO2. It participates in pyrimidine metabolism; UMP biosynthesis via de novo pathway; UMP from orotate: step 2/2. In terms of biological role, catalyzes the decarboxylation of orotidine 5'-monophosphate (OMP) to uridine 5'-monophosphate (UMP). This Staphylococcus saprophyticus subsp. saprophyticus (strain ATCC 15305 / DSM 20229 / NCIMB 8711 / NCTC 7292 / S-41) protein is Orotidine 5'-phosphate decarboxylase.